Reading from the N-terminus, the 425-residue chain is UPF0229 protein YE2273 (425 aa).

The interval 84–110 (TNDRIERPQGGGGGSGSGQGNAGQDGE) is disordered. A compositionally biased stretch (gly residues) spans 92 to 108 (QGGGGGSGSGQGNAGQD).

The protein belongs to the UPF0229 family.

This is UPF0229 protein YE2273 from Yersinia enterocolitica serotype O:8 / biotype 1B (strain NCTC 13174 / 8081).